The following is a 549-amino-acid chain: Cytochrome c oxidase subunit 1 homolog, bacteroid (549 aa).

The next 3 membrane-spanning stretches (helical) occupy residues 12–32 (IGESGLAVVFAATAFLCVIAA), 39–59 (PFAFHAALSAAASVAAVFCIV), and 87–107 (FSSFMAMFWGIAGFLVGLIIA). His-131 serves as a coordination point for heme b. 8 helical membrane passes run 132-152 (TSAVIFAFGGNVLIATSFYVV), 168-188 (FVVVGYNFFILVAGTGYLLGV), 201-221 (ADLWLTIVWVVYLLVFLATII), 228-248 (IFVANWFYLAFIVTIAVLHLG), 279-299 (GHNAVGFFLTAGFLAIMYYFI), 312-332 (LSIIHFWALIFLYIWAGPHHL), 344-364 (LGMTFSIMLWMPSWGGMINGL), and 382-402 (MLVVSVAFYGMSTFEGPMMSI). Residues His-280, His-330, and His-331 each contribute to the Cu cation site. Positions 418 and 420 each coordinate heme b. The next 3 membrane-spanning stretches (helical) occupy residues 423-443 (ALGWVGFVSFGALYCLVPWAW), 458-478 (FWVATLGIVLYISAMWVSGIL), and 512-532 (AGGGLFLIGALIMAYNLWMTV).

This sequence belongs to the heme-copper respiratory oxidase family. Requires Cu(2+) as cofactor. Heme b serves as cofactor.

The protein resides in the cell membrane. The enzyme catalyses 4 Fe(II)-[cytochrome c] + O2 + 8 H(+)(in) = 4 Fe(III)-[cytochrome c] + 2 H2O + 4 H(+)(out). It participates in energy metabolism; oxidative phosphorylation. In terms of biological role, cytochrome c oxidase is the component of the respiratory chain that catalyzes the reduction of oxygen to water. Subunits 1-3 form the functional core of the enzyme complex. Co I is the catalytic subunit of the enzyme. Electrons originating in cytochrome c or a quinol are transferred to the bimetallic center formed by a high-spin heme and copper B. This chain is Cytochrome c oxidase subunit 1 homolog, bacteroid (fixN), found in Bradyrhizobium diazoefficiens (strain JCM 10833 / BCRC 13528 / IAM 13628 / NBRC 14792 / USDA 110).